The primary structure comprises 116 residues: Antimicrobial peptide 1b (116 aa).

A signal peptide spans 1 to 34 (MKPHMSATVLRAPRVAAILLAVVLAAVLATAVNG). The Chitin-binding type-1 domain maps to 35 to 77 (AQRCGDQARGAKCPNCLCCGKYGFCGSGDAYCGAGSCQSQCRG). 5 disulfide bridges follow: C38–C53, C47–C59, C50–C78, C52–C66, and C71–C75. Positions 80–116 (DDVVGQALPAEPGSTRATAASSASARGLNLTATTGGP) are excised as a propeptide. The segment at 89 to 116 (AEPGSTRATAASSASARGLNLTATTGGP) is disordered. The segment covering 93-105 (STRATAASSASAR) has biased composition (low complexity).

Binds chitin. Has antifungal activity against the fungi F.solani (IC(50)=5 ug/ml), F.verticillioides (IC(50)=30 ug/ml), F.oxysporum (IC(50)=5 ug/ml), B.sorokiniana (IC(50)=5 ug/ml), B.cinerea (IC(50)=20 ug/ml) and N.crassa (IC(50)=10 ug/ml). Inhibits hyphal elongation and causes browning of hyphae in F.oxysporum. Causes destruction and discoloration of spores in B.sorokiniana. Inhibits the development of disease caused by the fungus P.infestans on potato tubers. Has antibacterial activity against the Gram-negative bacteria P.syringae and E.carotovora, and the Gram-positive bacterium C.michiganensis. Its function is as follows. Has antifungal activity against F.verticillioides (IC(50)=2.7 ug/ml). At concentrations between 45 uM and 225 uM, inhibits activity of metalloproteinase fungalysin Fv-cpm from F.verticillioides. This chain is Antimicrobial peptide 1b, found in Triticum kiharae (Wheat).